The chain runs to 346 residues: Ribonucleoside-diphosphate reductase subunit beta (346 aa).

Fe cation is bound by residues glutamate 89, glutamate 120, and histidine 123. Tyrosine 129 is an active-site residue. Fe cation contacts are provided by glutamate 193, glutamate 227, and histidine 230.

It belongs to the ribonucleoside diphosphate reductase small chain family. In terms of assembly, tetramer of two alpha and two beta subunits. It depends on Fe cation as a cofactor.

The enzyme catalyses a 2'-deoxyribonucleoside 5'-diphosphate + [thioredoxin]-disulfide + H2O = a ribonucleoside 5'-diphosphate + [thioredoxin]-dithiol. Its function is as follows. Provides the precursors necessary for DNA synthesis. Catalyzes the biosynthesis of deoxyribonucleotides from the corresponding ribonucleotides. The chain is Ribonucleoside-diphosphate reductase subunit beta (nrdB) from Chlamydia trachomatis serovar D (strain ATCC VR-885 / DSM 19411 / UW-3/Cx).